The chain runs to 808 residues: Protein translocase subunit SecA 2 (808 aa).

Residues Gln-124, 142–146, and Asp-535 each bind ATP; that span reads GEGKT.

Belongs to the SecA family. As to quaternary structure, monomer and homodimer. Part of the essential Sec protein translocation apparatus which comprises SecA, SecYEG and auxiliary proteins SecDF. Other proteins may also be involved.

The protein localises to the cell membrane. Its subcellular location is the cytoplasm. It catalyses the reaction ATP + H2O + cellular proteinSide 1 = ADP + phosphate + cellular proteinSide 2.. In terms of biological role, part of the Sec protein translocase complex. Interacts with the SecYEG preprotein conducting channel. Has a central role in coupling the hydrolysis of ATP to the transfer of proteins into and across the cell membrane, serving as an ATP-driven molecular motor driving the stepwise translocation of polypeptide chains across the membrane. This Mycobacterium bovis (strain BCG / Pasteur 1173P2) protein is Protein translocase subunit SecA 2.